We begin with the raw amino-acid sequence, 677 residues long: Heat shock transcription factor (677 aa).

Disordered regions lie at residues 1–56 (MGHN…DDSN) and 115–164 (STSS…SQQP). Polar residues-rich tracts occupy residues 115–131 (STSS…TNAT) and 143–164 (QPSS…SQQP). A DNA-binding region spans residues 193 to 297 (ARPAFVNKLW…EYLLENIVRQ (105 aa)). The involved in trimerization stretch occupies residues 320–373 (ELETVKYNQLAIAEDLKRITKDNEMLWKENMMARERHQSQQQVLEKLLRFLSSV). Low complexity-rich tracts occupy residues 400–416 (NHMS…INPN) and 457–501 (RSMS…QGQQ). Disordered stretches follow at residues 400-444 (NHMS…VPLQ), 457-541 (RSMS…NQYS), and 606-677 (KLNP…RRAA). The interval 466-677 (NLNQRQSPQN…NNGQKRRRAA (212 aa)) is activatory. Composition is skewed to polar residues over residues 502–541 (FSYP…NQYS) and 629–641 (FANT…SEQP). A compositionally biased stretch (basic and acidic residues) spans 650–669 (EELRNSRLHEPDRSFEEKNN).

The protein belongs to the HSF family. Homotrimer. Homotrimerization increases the affinity of HSF1 to DNA. In terms of processing, exhibits temperature-dependent phosphorylation.

The protein localises to the nucleus. Functionally, DNA-binding transcription factor that specifically binds heat shock promoter elements (HSE) and activates transcription. The protein is Heat shock transcription factor of Kluyveromyces lactis (strain ATCC 8585 / CBS 2359 / DSM 70799 / NBRC 1267 / NRRL Y-1140 / WM37) (Yeast).